The primary structure comprises 840 residues: Translation initiation factor IF-2 (840 aa).

Positions 95-143 (RSPDEIEAERQRELEEQRAAEEAERLKAEEAAARQRAEEEARKAEEAAR) are enriched in basic and acidic residues. Disordered stretches follow at residues 95–155 (RSPD…ATAG) and 173–256 (PAAV…PTGP). Positions 144 to 155 (AKAAQEAAATAG) are enriched in low complexity. 2 stretches are compositionally biased toward basic and acidic residues: residues 175–191 (AVEERKKEEPRRVPKRD) and 223–232 (STDEESDGYR). The segment covering 233 to 247 (RGGRGGKSKLKKRNQ) has biased composition (basic residues). Residues 340 to 509 (TRAPVVTVMG…LLQAEVLELK (170 aa)) form the tr-type G domain. Residues 349–356 (GHVDHGKT) form a G1 region. 349-356 (GHVDHGKT) provides a ligand contact to GTP. Residues 374-378 (GITQH) are G2. The interval 395-398 (DTPG) is G3. GTP is bound by residues 395–399 (DTPGH) and 449–452 (NKID). The G4 stretch occupies residues 449-452 (NKID). The segment at 485–487 (SAK) is G5.

Belongs to the TRAFAC class translation factor GTPase superfamily. Classic translation factor GTPase family. IF-2 subfamily.

It is found in the cytoplasm. In terms of biological role, one of the essential components for the initiation of protein synthesis. Protects formylmethionyl-tRNA from spontaneous hydrolysis and promotes its binding to the 30S ribosomal subunits. Also involved in the hydrolysis of GTP during the formation of the 70S ribosomal complex. This Pseudomonas aeruginosa (strain ATCC 15692 / DSM 22644 / CIP 104116 / JCM 14847 / LMG 12228 / 1C / PRS 101 / PAO1) protein is Translation initiation factor IF-2.